A 690-amino-acid polypeptide reads, in one-letter code: Methionine--tRNA ligase 1 (690 aa).

The 'HIGH' region signature appears at 11–21; that stretch reads PYANGHIHIGH. 4 residues coordinate Zn(2+): cysteine 142, cysteine 145, cysteine 155, and cysteine 158. Residues 328–332 carry the 'KMSKS' region motif; sequence KMSKS. Residue lysine 331 participates in ATP binding. The tRNA-binding domain maps to 590–690; that stretch reads DFSKVDLRVA…SGAKPGMRVH (101 aa).

This sequence belongs to the class-I aminoacyl-tRNA synthetase family. MetG type 1 subfamily. As to quaternary structure, homodimer. Zn(2+) is required as a cofactor.

It localises to the cytoplasm. It carries out the reaction tRNA(Met) + L-methionine + ATP = L-methionyl-tRNA(Met) + AMP + diphosphate. In terms of biological role, is required not only for elongation of protein synthesis but also for the initiation of all mRNA translation through initiator tRNA(fMet) aminoacylation. This is Methionine--tRNA ligase 1 from Sorangium cellulosum (strain So ce56) (Polyangium cellulosum (strain So ce56)).